Reading from the N-terminus, the 202-residue chain is LexA repressor (202 aa).

The segment at residues 28 to 48 is a DNA-binding region (H-T-H motif); the sequence is RAEIAQQLGFRSPNAAEEHLK. Active-site for autocatalytic cleavage activity residues include Ser119 and Lys156.

This sequence belongs to the peptidase S24 family. Homodimer.

It catalyses the reaction Hydrolysis of Ala-|-Gly bond in repressor LexA.. In terms of biological role, represses a number of genes involved in the response to DNA damage (SOS response), including recA and lexA. Binds to the 16 bp palindromic sequence 5'-CTGTATATATATACAG-3'. In the presence of single-stranded DNA, RecA interacts with LexA causing an autocatalytic cleavage which disrupts the DNA-binding part of LexA, leading to derepression of the SOS regulon and eventually DNA repair. This chain is LexA repressor, found in Pectobacterium carotovorum subsp. carotovorum (strain PC1).